Consider the following 209-residue polypeptide: Large ribosomal subunit protein uL3 (209 aa).

Residue glutamine 150 is modified to N5-methylglutamine.

It belongs to the universal ribosomal protein uL3 family. In terms of assembly, part of the 50S ribosomal subunit. Forms a cluster with proteins L14 and L19. In terms of processing, methylated by PrmB.

In terms of biological role, one of the primary rRNA binding proteins, it binds directly near the 3'-end of the 23S rRNA, where it nucleates assembly of the 50S subunit. This Aliivibrio salmonicida (strain LFI1238) (Vibrio salmonicida (strain LFI1238)) protein is Large ribosomal subunit protein uL3.